Here is a 1538-residue protein sequence, read N- to C-terminus: Myosin-9 (1538 aa).

In terms of domain architecture, Myosin N-terminal SH3-like spans 16–65 (SIGSHVWFEDPEVAWIDGEVEKINGQEVVIQATTGKKVTAKLSKIYPKDV). The region spanning 70 to 740 (GGVDDMTKLS…QMAELDARRA (671 aa)) is the Myosin motor domain. ATP contacts are provided by residues 164–171 (GESGAGKT) and 217–225 (NNNSSRFGK). Actin-binding regions lie at residues 503-537 (LIEK…YQTF), 539-562 (THKR…AGEV), 597-621 (FPPL…KLQL), and 621-643 (LQQL…KPNN). IQ domains are found at residues 743-772 (LSSA…ATIS), 766-795 (LRKA…EAAA), 791-820 (REAA…ASLV), 814-843 (LHVA…TKAA), 839-868 (QTKA…GVVL), and 862-891 (LKNG…AARE). Residues 892–1064 (TGALKEAKDM…VLRQQAVSMA (173 aa)) adopt a coiled-coil conformation. The span at 1017-1032 (SLEDKKKKLEETEKKG) shows a compositional bias: basic and acidic residues. Disordered regions lie at residues 1017-1041 (SLED…SLTR) and 1098-1121 (SHSI…NEKQ). Positions 1168-1481 (DRIIQTIGHA…IANMRVLMTE (314 aa)) constitute a Dilute domain.

This sequence belongs to the TRAFAC class myosin-kinesin ATPase superfamily. Myosin family. Plant myosin class XI subfamily. Homodimer.

In terms of biological role, myosin heavy chain that is required for the cell cycle-regulated transport of various organelles and proteins for their segregation. Functions by binding with its tail domain to receptor proteins on organelles and exerting force with its N-terminal motor domain against actin filaments, thereby transporting its cargo along polarized actin cables. Involved in trafficking of Golgi stacks and mitochondria. This Arabidopsis thaliana (Mouse-ear cress) protein is Myosin-9 (XI-C).